Here is a 461-residue protein sequence, read N- to C-terminus: Phosphoglucosamine mutase (461 aa).

The active-site Phosphoserine intermediate is the S113. Residues S113, D251, D253, and D255 each coordinate Mg(2+). S113 carries the post-translational modification Phosphoserine.

The protein belongs to the phosphohexose mutase family. Requires Mg(2+) as cofactor. Post-translationally, activated by phosphorylation.

It catalyses the reaction alpha-D-glucosamine 1-phosphate = D-glucosamine 6-phosphate. Its function is as follows. Catalyzes the conversion of glucosamine-6-phosphate to glucosamine-1-phosphate. The sequence is that of Phosphoglucosamine mutase from Prochlorococcus marinus (strain SARG / CCMP1375 / SS120).